Here is a 355-residue protein sequence, read N- to C-terminus: UPF0421 protein BCE_2776 (355 aa).

4 helical membrane passes run 19–39 (IAVF…IFAV), 74–94 (FTFF…FTIV), 109–129 (TLTA…AFLI), and 131–151 (LATT…ILPP).

Belongs to the UPF0421 family.

It localises to the cell membrane. The protein is UPF0421 protein BCE_2776 of Bacillus cereus (strain ATCC 10987 / NRS 248).